Consider the following 505-residue polypeptide: Ikaros family zinc finger protein (505 aa).

C2H2-type zinc fingers lie at residues 18–40 (LTCEICGMVCIGPNVLMVHKRSH), 46–68 (FQCNQCGASFTQKGNLLRHVKLH), 74–96 (FKCSLCSYACRRRDALMGHIRTH), and 102–128 (YKCNFCSRSYKQRSSLEEHQERCPGFH). 2 stretches are compositionally biased toward polar residues: residues 262 to 273 (FLNTPSPVTRSA) and 309 to 327 (RFQHDSPLSTSRSGLSQQP). 2 disordered regions span residues 262 to 296 (FLNTPSPVTRSAGQALEATRRLESESPGLPSDIGS) and 309 to 440 (RFQH…VSGS). Residues 336 to 345 (ILGGSLGGIC) show a composition bias toward gly residues. A compositionally biased stretch (polar residues) spans 366–377 (ATSSPSNSCPDS). Low complexity predominate over residues 393-406 (GSGSSTSRPNGSTG). Residues 409 to 419 (HRPEMHQDNGR) are compositionally biased toward basic and acidic residues. The span at 424–439 (SGASDSSSLPTYNVSG) shows a compositional bias: polar residues. 2 C2H2-type zinc fingers span residues 448 to 470 (YPCHHCGLLFLDHVMYTLHMGCH) and 476 to 500 (FECNVCGYRSRDRYEFSSHIIRGEH).

It belongs to the Ikaros C2H2-type zinc-finger protein family. Heterodimer and homodimer with other IKAROS family members. Expression is strongest in the blood, gills and intestine.

The protein localises to the nucleus. The polypeptide is Ikaros family zinc finger protein (Myxine glutinosa (Atlantic hagfish)).